Reading from the N-terminus, the 398-residue chain is UPF0496 protein At5g66660 (398 aa).

Helical transmembrane passes span 240–260 (VFFATAYVSVLVLSVVATTMS) and 263–283 (PVVCAVASGSTAPIEITGKWF).

This sequence belongs to the UPF0496 family.

It is found in the membrane. This Arabidopsis thaliana (Mouse-ear cress) protein is UPF0496 protein At5g66660.